The primary structure comprises 673 residues: Armadillo repeat-containing protein 8 (673 aa).

Ala2 bears the N-acetylalanine mark. ARM repeat units follow at residues 51-92 (NKQK…SLAM), 95-134 (ENNV…TIFT), 138-176 (TPEE…HCCK), 178-217 (PDHQ…VLAF), 224-265 (MTLV…YMCR), 269-309 (IRTD…YLIE), 313-352 (ELQR…HDLK), 374-413 (DIRK…SLSR), 416-455 (QQLR…NLLL), 458-497 (SPSK…NMAF), 501-540 (QKIK…NLLS), 543-585 (PHID…NIAD), 588-627 (TAKD…NLIW), and 634-673 (QERQ…QYLA). Ser337 carries the phosphoserine modification. Ser512 is modified (phosphoserine).

As to quaternary structure, identified in the CTLH complex that contains GID4, RANBP9 and/or RANBP10, MKLN1, MAEA, RMND5A (or alternatively its paralog RMND5B), GID8, ARMC8, WDR26 and YPEL5. Within this complex, MAEA, RMND5A (or alternatively its paralog RMND5B), GID8, WDR26, and RANBP9 and/or RANBP10 form the catalytic core, while GID4, MKLN1, ARMC8 and YPEL5 have ancillary roles.

Its subcellular location is the nucleus. It is found in the cytoplasm. Its function is as follows. Component of the CTLH E3 ubiquitin-protein ligase complex that selectively accepts ubiquitin from UBE2H and mediates ubiquitination and subsequent proteasomal degradation of the transcription factor HBP1. The sequence is that of Armadillo repeat-containing protein 8 (ARMC8) from Homo sapiens (Human).